Here is a 472-residue protein sequence, read N- to C-terminus: Ribulose bisphosphate carboxylase large chain (472 aa).

N115 and T165 together coordinate substrate. Residue K167 is the Proton acceptor of the active site. Residue K169 coordinates substrate. Residues K193, D195, and E196 each contribute to the Mg(2+) site. Position 193 is an N6-carboxylysine (K193). Residue H286 is the Proton acceptor of the active site. 3 residues coordinate substrate: R287, H319, and S371.

The protein belongs to the RuBisCO large chain family. Type I subfamily. In terms of assembly, heterohexadecamer of 8 large chains and 8 small chains. Requires Mg(2+) as cofactor.

It carries out the reaction 2 (2R)-3-phosphoglycerate + 2 H(+) = D-ribulose 1,5-bisphosphate + CO2 + H2O. It catalyses the reaction D-ribulose 1,5-bisphosphate + O2 = 2-phosphoglycolate + (2R)-3-phosphoglycerate + 2 H(+). RuBisCO catalyzes two reactions: the carboxylation of D-ribulose 1,5-bisphosphate, the primary event in carbon dioxide fixation, as well as the oxidative fragmentation of the pentose substrate. Both reactions occur simultaneously and in competition at the same active site. The chain is Ribulose bisphosphate carboxylase large chain from Solemya velum gill symbiont.